The chain runs to 396 residues: Phosphoglycerate kinase (396 aa).

Substrate contacts are provided by residues 22–24 (DFN), Arg37, 60–63 (HFGR), Arg118, and Arg151. ATP is bound by residues Lys201, Glu322, and 352 to 355 (GGDS).

It belongs to the phosphoglycerate kinase family. As to quaternary structure, monomer.

Its subcellular location is the cytoplasm. The enzyme catalyses (2R)-3-phosphoglycerate + ATP = (2R)-3-phospho-glyceroyl phosphate + ADP. It functions in the pathway carbohydrate degradation; glycolysis; pyruvate from D-glyceraldehyde 3-phosphate: step 2/5. This is Phosphoglycerate kinase from Wolbachia pipientis subsp. Culex pipiens (strain wPip).